Reading from the N-terminus, the 425-residue chain is tRNA (guanine-N(7)-)-methyltransferase non-catalytic subunit wuho (425 aa).

The segment at 67-102 (ATCAGKEPGGKEQQLTKQPEEGGTTASGSGVTSTSV) is disordered. Low complexity predominate over residues 88–102 (GGTTASGSGVTSTSV). WD repeat units follow at residues 97–138 (VTST…ARLL), 142–181 (PLARAASAVRFCSDSSSVLVTDKTGDCYQYDCVELEAPPR), 185–224 (GHLSVVYDILWSEDQQHIITCDRDDKIRVTNYPATFDIHS), 228–266 (GHREFVSGLALLTDKHIASASGDKTLRVWNYIQGKELLQ), and 325–365 (AGSW…PATS).

Belongs to the WD repeat TRM82 family. Forms a heterodimer with the catalytic subunit Mettl1. Interacts with mei-P26 and weakly interacts with bgcn; required for the function or formation of the mei-P26-bgcn-bam-sxl complex. Interacts with nanos; may be involved in mei-P26-dependent derepression of the BMP signaling pathway. Interacts with Myc; the interaction may be mediated by mei-P26 and may be involved in the regulation of ribosome biogenesis. In testis, it is present at high level in hub cells, a niche for germline stem cells of testis. Ubiquitously expressed in all testicular cells throughout spermatogenesis. Ubiquitously expressed in all germline and somatic cells of the ovary.

The protein resides in the nucleus. Its subcellular location is the cytoplasm. It participates in tRNA modification; N(7)-methylguanine-tRNA biosynthesis. Required for the Mettl1-dependent formation of N(7)-methylguanine at position 46 (m7G46) in tRNA. In the Mettl1-wuho methyltransferase complex, it is required to stabilize and induce conformational changes of the catalytic subunit. Required for binding of nanos mRNA and repression of translation by the mei-P26-bgcn-bam-sxl complex. May cooperate with mei-P26 and nanos to derepress the BMP signaling pathway. May cooperate with mei-P26 to suppress expression of a subset of microRNAs. May cooperate with mei-P26 to regulate bam expression levels in germline cells during gametogenesis. Required to promote mitosis to meiosis transition during gametogenesis. May regulate germline cell division in part by regulating ribosome biogenesis. This is tRNA (guanine-N(7)-)-methyltransferase non-catalytic subunit wuho from Drosophila yakuba (Fruit fly).